A 447-amino-acid polypeptide reads, in one-letter code: GTPase Der (447 aa).

EngA-type G domains follow at residues 4–165 (QIIT…PEEE) and 180–357 (LQIV…KIWN). GTP is bound by residues 10–17 (GRPNVGKS), 57–61 (DTPGL), 119–122 (NKCE), 186–193 (GRPNAGKS), 233–237 (DTAGL), and 298–301 (NKWD). The region spanning 358–443 (KKITTSKLNE…PIRFIYVKTK (86 aa)) is the KH-like domain.

The protein belongs to the TRAFAC class TrmE-Era-EngA-EngB-Septin-like GTPase superfamily. EngA (Der) GTPase family. In terms of assembly, associates with the 50S ribosomal subunit.

In terms of biological role, GTPase that plays an essential role in the late steps of ribosome biogenesis. This Rickettsia peacockii (strain Rustic) protein is GTPase Der.